Here is a 652-residue protein sequence, read N- to C-terminus: MKKSKSKYLTLAGLVLGTGVLLSACGNSSTASKTYNYVYSSDPSSLNYLAENRAATSDIVANLVDGLLENDQYGNIIPSLAEDWTVSQDGLTYTYKLRKDAKWFTSEGEEYAPVTAQDFVTGLQYAADKKSEALYLVQDSVAGLDDYITGKTSDFSTVGVKALDDQTVQYTLVKPELYWNSKTLATILFPVNADFLKSKGDDFGKADPSSILYNGPFLMKALVSKSAIEYKKNPNYWDAKNVFVDDVKLTYYDGSDQESLERNFTAGAYTTARLFPNSSSYEGIKEKYKNNIIYSMQNSTSYFFNFNLDRKSYNYTSKTSDIEKKSTQEAVLNKNFRQAINFAFDRTSYGAQSEGKEGATKILRNLVVPPNFVSIKGKDFGEVVASKMVNYGKEWQGINFADGQDPYYNPEKAKAKFAEAKKELEAKGVQFPIHLDKTVEVTDKVGIQGVSSIKQSIESVLGSDNVVIDIQQLTSDEFDSSGYFAQTAAQKDYDLYHGGWGPDYQDPSTYLDIFNTNSGGFLQNLGLEPGEANDKAKAVGLDVYTQMLEEANKEQDPAKRYEKYADIQAWLIDSSLVLPSVSRGGTPSLRRTVPFAAAYGLTGTKGVESYKYLKVQDKIVTTDEYAKAREKWLKEKEESNKKAQEELAKHVK.

An N-terminal signal peptide occupies residues 1–24; it reads MKKSKSKYLTLAGLVLGTGVLLSA. Cys25 is lipidated: N-palmitoyl cysteine. A lipid anchor (S-diacylglycerol cysteine) is attached at Cys25.

This sequence belongs to the bacterial solute-binding protein 5 family.

It is found in the cell membrane. Functionally, part of the binding-protein-dependent transport system for oligopeptides; probably an oligopeptide binding protein. This Streptococcus pneumoniae serotype 4 (strain ATCC BAA-334 / TIGR4) protein is Oligopeptide-binding protein AliB (aliB).